Here is a 292-residue protein sequence, read N- to C-terminus: Putative xanthine dehydrogenase FAD-binding subunit XdhB (292 aa).

Residues 1–176 (MFDFASYHRA…VAFHFPPQPK (176 aa)) enclose the FAD-binding PCMH-type domain. FAD contacts are provided by residues 27-34 (KLLAGGTD), 109-113 (ATYGG), isoleucine 165, and phenylalanine 184.

Heterotrimer of XdhA, XdhB and XdhC. Requires FAD as cofactor.

It carries out the reaction xanthine + NAD(+) + H2O = urate + NADH + H(+). The enzyme catalyses hypoxanthine + NAD(+) + H2O = xanthine + NADH + H(+). Its pathway is purine metabolism; hypoxanthine degradation; urate from hypoxanthine: step 1/2. The protein operates within purine metabolism; hypoxanthine degradation; urate from hypoxanthine: step 2/2. Its function is as follows. Presumed to be a dehydrogenase, but possibly an oxidase. Participates in limited purine salvage (requires aspartate) but does not support aerobic growth on purines as the sole carbon source (purine catabolism). In Escherichia coli (strain K12), this protein is Putative xanthine dehydrogenase FAD-binding subunit XdhB (xdhB).